We begin with the raw amino-acid sequence, 21 residues long: Neuropeptide gamma (21 aa).

Positions 1 to 21 (SSANPQITRKRHKINSFVGLM) are disordered. Methionine 21 is subject to Methionine amide.

This sequence belongs to the tachykinin family.

It is found in the secreted. Tachykinins are active peptides which excite neurons, evoke behavioral responses, and contract (directly or indirectly) many smooth muscles. Is a potent vasoconstrictor and secretagogue that plays a regulatory role in the central control of ventilation, in particular, the heart rate variability (HRV). The protein is Neuropeptide gamma of Oncorhynchus mykiss (Rainbow trout).